Consider the following 333-residue polypeptide: Fructose-1,6-bisphosphatase class 1 (333 aa).

Mg(2+) is bound by residues glutamate 92, aspartate 113, leucine 115, and aspartate 116. Substrate contacts are provided by residues 116-119, asparagine 209, tyrosine 242, and lysine 272; that span reads DGSS. Glutamate 278 is a Mg(2+) binding site.

Belongs to the FBPase class 1 family. As to quaternary structure, homotetramer. Mg(2+) is required as a cofactor.

It localises to the cytoplasm. The enzyme catalyses beta-D-fructose 1,6-bisphosphate + H2O = beta-D-fructose 6-phosphate + phosphate. It functions in the pathway carbohydrate biosynthesis; Calvin cycle. This Chlorobium phaeobacteroides (strain BS1) protein is Fructose-1,6-bisphosphatase class 1.